The chain runs to 447 residues: MTQRKYFGTDGVRGEVGGEVINAAFALRLGYAAGRVLARQHGGRGGSRPQVVIGKDTRISGYMLESALEAGLSAAGIDVLLAGPVPTPAVAYLTRALRLVAGIVISASHNPYQDNGIKFFSAQGMKLPDEVEAEIEAALHEPLGCVGSEALGRARRMQDSQGRYIEFCKSTFPNDLDLNGVKIVVDAAHGAAYNVAPHVFRELGADVHAIGVSPDGFNINEGVGALHPESLARAVRERGAHLGIALDGDADRLQMVDGDGRIYNGDELLYAIVRERMSRGTVAGVVGTLMTNYGFELEMQRLGVGFERAKVGDRYVMEQMQARGWLYGGESSGHLICLDCHTTGDGIIAALQVLTALRRGNVPLADWLGDLRMYPQKMINVPLAPGTDWKSHAGLAAATRAVEAELAGRGRVLIRASGTEPKLRLMVEAEEPALAASCAEKLAASLA.

Residue Ser108 is the Phosphoserine intermediate of the active site. Ser108, Asp247, Asp249, and Asp251 together coordinate Mg(2+). Ser108 is subject to Phosphoserine.

This sequence belongs to the phosphohexose mutase family. Requires Mg(2+) as cofactor. Activated by phosphorylation.

It carries out the reaction alpha-D-glucosamine 1-phosphate = D-glucosamine 6-phosphate. In terms of biological role, catalyzes the conversion of glucosamine-6-phosphate to glucosamine-1-phosphate. The polypeptide is Phosphoglucosamine mutase (Bordetella petrii (strain ATCC BAA-461 / DSM 12804 / CCUG 43448)).